An 80-amino-acid chain; its full sequence is MLRANVVVSLVIFAALMQCMNGKENITPWIYSMKQPVSCNREHSEIGICLSGIDDDIQNDGKCWKFCLMVAKSGGYNADK.

Positions 1-22 (MLRANVVVSLVIFAALMQCMNG) are cleaved as a signal peptide.

The protein belongs to the DEFL family.

Its subcellular location is the secreted. This is Putative defensin-like protein 28 from Arabidopsis thaliana (Mouse-ear cress).